The sequence spans 156 residues: Large ribosomal subunit protein uL15 (156 aa).

The segment at M1–Q56 is disordered.

Belongs to the universal ribosomal protein uL15 family. In terms of assembly, part of the 50S ribosomal subunit.

Binds to the 23S rRNA. This is Large ribosomal subunit protein uL15 from Salinibacter ruber (strain DSM 13855 / M31).